The primary structure comprises 319 residues: Ninja-family protein AFP4 (319 aa).

Residues 39–54 (DSEHGENQQEAKKRED) show a composition bias toward basic and acidic residues. Disordered regions lie at residues 39–63 (DSEHGENQQEAKKREDEAEEDEKDV), 99–120 (FVFDEQRSGGGNGGDMRRIVGR), and 205–228 (VTGPVNGKGKNGNTAKKQKNNVEN).

It belongs to the Ninja family. As to quaternary structure, interacts with ABI5/DPBF1, AREB3/DPBF3, EEL/DPBF4, ABF1 and ABF3/DPBF5. In terms of tissue distribution, predominantly expressed in roots and seedlings.

It is found in the nucleus. Its function is as follows. Acts as a negative regulator of abscisic acid (ABA) and salinity responses. This Arabidopsis thaliana (Mouse-ear cress) protein is Ninja-family protein AFP4 (AFP4).